The primary structure comprises 341 residues: Putative UPF0607 protein ENSP00000381514 (341 aa).

Basic and acidic residues predominate over residues 78–89; sequence AEEPKEATEVKD. Disordered stretches follow at residues 78-131 and 216-282; these read AEEP…NPRP and GLLT…KLPC. The segment covering 108–127 has biased composition (polar residues); that stretch reads EAASTSRPLETQGNLTSSWY. Positions 243–252 are enriched in basic residues; the sequence is AGHRSRKRKL.

The protein belongs to the UPF0607 family.

The polypeptide is Putative UPF0607 protein ENSP00000381514 (Homo sapiens (Human)).